A 474-amino-acid chain; its full sequence is MTKKLHIKTWGCQMNEYDSSKMADLLDATHGYQLTEVAEEADVLLLNTCSIREKAQEKVFHQLGRWKLLKEKNPDLIIGVGGCVASQEGDHIRQRAHYVDIIFGPQTLHRLPEMINSVRGNRSPVVDISFPEIEKFDRLPEPRAEGPTAFVSIMEGCNKYCTYCVVPYTRGEEVSRPCDDILFEIAQLAAQGVREVNLLGQNVNAWRGENYDGTTGSFADLLRLVAAIDGIDRIRFTTSHPIEFTDDIIDVYRDTPELVSFLHLPVQSGSDRVLNLMGRTHTALEYKAIIRKLREARPDIQISSDFIVGFPGETTEDFEKTMKLIADVNFDMSYSFIFSARPGTPAADMVDDVPEADKKQRLYILQERINQQAMAWSRRMLGTVQRILVEGTSRKNIMELSGRTENNRVVNFEGTPDLVGKFVDVEIVDVYTNSLRGKIVRTEAEMGLRIAESPESVIARTRKENDLGVGIYQP.

The region spanning 3-120 (KKLHIKTWGC…LPEMINSVRG (118 aa)) is the MTTase N-terminal domain. Residues cysteine 12, cysteine 49, cysteine 83, cysteine 157, cysteine 161, and cysteine 164 each coordinate [4Fe-4S] cluster. Positions 143-375 (RAEGPTAFVS…QERINQQAMA (233 aa)) constitute a Radical SAM core domain. Positions 378–441 (RRMLGTVQRI…TNSLRGKIVR (64 aa)) constitute a TRAM domain.

Belongs to the methylthiotransferase family. MiaB subfamily. In terms of assembly, monomer. [4Fe-4S] cluster serves as cofactor.

It localises to the cytoplasm. The catalysed reaction is N(6)-dimethylallyladenosine(37) in tRNA + (sulfur carrier)-SH + AH2 + 2 S-adenosyl-L-methionine = 2-methylsulfanyl-N(6)-dimethylallyladenosine(37) in tRNA + (sulfur carrier)-H + 5'-deoxyadenosine + L-methionine + A + S-adenosyl-L-homocysteine + 2 H(+). Its function is as follows. Catalyzes the methylthiolation of N6-(dimethylallyl)adenosine (i(6)A), leading to the formation of 2-methylthio-N6-(dimethylallyl)adenosine (ms(2)i(6)A) at position 37 in tRNAs that read codons beginning with uridine. The protein is tRNA-2-methylthio-N(6)-dimethylallyladenosine synthase of Klebsiella pneumoniae subsp. pneumoniae (strain ATCC 700721 / MGH 78578).